A 669-amino-acid polypeptide reads, in one-letter code: Protein fem-1 homolog A (669 aa).

ANK repeat units follow at residues 2 to 31 (DLRT…REEL), 40 to 70 (GGGT…SVEA), 82 to 111 (EGAP…SVNR), 115 to 145 (TNST…DLEV), 149 to 178 (HGHT…QVNR), 182 to 211 (KGNT…RMER), and 214 to 243 (YGMT…GQEQ). Serine 108 is subject to Phosphoserine. The interval 240-278 (GQEQVAGGEAQPGLPQEDPSTSQGCAQPQGAPCCSSSPE) is disordered. TPR repeat units lie at residues 298 to 332 (VEAL…RHQG) and 390 to 423 (SYYI…QQSN). ANK repeat units lie at residues 534 to 576 (NGFT…DPDS) and 580 to 609 (DNNT…HMDA).

It belongs to the fem-1 family. Component of a CRL2 E3 ubiquitin-protein ligase complex, also named ECS (Elongin BC-CUL2/5-SOCS-box protein) complex, composed of CUL2, Elongin BC (ELOB and ELOC), RBX1 and substrate-specific adapter FEM1A. Interacts with PTGER4. Interacts with NFKB1; the interaction is direct. Phosphorylated; highly phosphorylated in myoblasts and myotubes. Phosphorylation at Ser-108 promotes PGE2-EP4-mediated inhibition of inflammation. Dephosphorylated by protein phosphatase 2A (PP2A). As to expression, present in macrophages derived from peripheral blood monocytes. Also present in atheromata (at protein level).

The protein resides in the mitochondrion. It localises to the cytoplasm. The protein operates within protein modification; protein ubiquitination. Functionally, substrate-recognition component of a Cul2-RING (CRL2) E3 ubiquitin-protein ligase complex of the DesCEND (destruction via C-end degrons) pathway, which recognizes a C-degron located at the extreme C terminus of target proteins, leading to their ubiquitination and degradation. The C-degron recognized by the DesCEND pathway is usually a motif of less than ten residues and can be present in full-length proteins, truncated proteins or proteolytically cleaved forms. The CRL2(FEM1A) complex specifically recognizes proteins with an arginine at the C-terminus: recognizes and binds proteins ending with -Lys/Arg-Xaa-Arg and -Lys/Arg-Xaa-Xaa-Arg C-degrons, such as SIL1 or OR51B2, leading to their ubiquitination and degradation. Promotes ubiquitination and degradation of SLBP. Involved in PGE2-EP4-mediated inhibition of inflammation of macrophages via interaction with NFKB1 and PTGER4. Promotes inflammation in brain microglia through MAP2K4/MKK4-mediated signaling. The protein is Protein fem-1 homolog A of Homo sapiens (Human).